We begin with the raw amino-acid sequence, 207 residues long: Guanylate kinase (207 aa).

The Guanylate kinase-like domain maps to 5–184 (GNLFIVSAPS…ALADLRAIIR (180 aa)). 12–19 (APSGAGKS) serves as a coordination point for ATP.

Belongs to the guanylate kinase family.

It localises to the cytoplasm. The enzyme catalyses GMP + ATP = GDP + ADP. Its function is as follows. Essential for recycling GMP and indirectly, cGMP. This Shewanella sp. (strain MR-7) protein is Guanylate kinase.